Reading from the N-terminus, the 150-residue chain is Transcriptional repressor NrdR (150 aa).

Residues cysteine 3–cysteine 34 fold into a zinc finger. The 91-residue stretch at proline 49–glutamate 139 folds into the ATP-cone domain.

Belongs to the NrdR family. The cofactor is Zn(2+).

Its function is as follows. Negatively regulates transcription of bacterial ribonucleotide reductase nrd genes and operons by binding to NrdR-boxes. This chain is Transcriptional repressor NrdR, found in Geobacter metallireducens (strain ATCC 53774 / DSM 7210 / GS-15).